The primary structure comprises 249 residues: DNA polymerase sliding clamp 3 (249 aa).

This sequence belongs to the PCNA family. As to quaternary structure, homotrimer. The subunits circularize to form a toroid; DNA passes through its center. Replication factor C (RFC) is required to load the toroid on the DNA.

Functionally, sliding clamp subunit that acts as a moving platform for DNA processing. Responsible for tethering the catalytic subunit of DNA polymerase and other proteins to DNA during high-speed replication. The polypeptide is DNA polymerase sliding clamp 3 (Aeropyrum pernix (strain ATCC 700893 / DSM 11879 / JCM 9820 / NBRC 100138 / K1)).